We begin with the raw amino-acid sequence, 2682 residues long: MQTEEWKMANQDNNKPQRDSERCVFLFGSLSLSFDASAFAQVRKAIANDERNSWLVNAARQLPQDLETILSGLPSLNNSNTRARKQLADLHNAIIGGRPLDTPFPLPNTVLIPLVVIEQLSQYADFARQKGVERSGTPDGWPAIEADTKSLGLCTGNLAAFATSSARSWGDFQKYGAAAVRLGLLVGLVIDSQDEAFDSRRWRSLSVAWSGSQGGEELQRILPEFDETYVSVYYDACRSTITTPVSSLPTLVHRLKAAGLGVTEITLYGAFHSAARNSAVLEQLTVFCDSHADFQLSTSAASVAALQANDNTDHKDIIRKQGALHAKALRRILVEPAQWFDALAAVLGEEGERARVVSFGSERSVPLSLAMRSNVRVVHATDTHDGNRGTNADGGERMWAESDIAVIGMACKVAGAEGVEEFWELLVEGHSQHRDISASERFSFDDTAFRTASDSNMQRKWYANLVDGHDQFDHRFFKKSARESAAMDPQQRQLLQVAYQAAEQAGCFTRTNSVCDGNVGCFVGVCLSDYESNVGCHPANAFTATGNLQGFIAGKVSHFLGWTGPALTIDTACSSSLVAVHQACASILAGECNSALAGGTHIMTTAGWFQNLAAGAFVSPTGQCKPFDAAADGYCRGEGVGAVVLKKLSQAIADGDRVLGVIGATAVQQNQNCTPIFVPNVPSLSALFTTVTAKAHVKPASVSVVEAHGTGTAVGDPAEWASIRQTLGGLNRPPERPLMVSSTKGLVGHLECTSGIISLIKVLLMVQKRMLPPQASFDTLNPVLNAQPSDHMFVPRRAQPWDAEFRVALINNYGASGSNASMIVMQPPTFDTVAPIHLAAAVRSPDCRYPFWLSGLDSSSLRRRAKALRRFLSRGLGPASSLAPSLASISYNLAHQGDRALDQRITFTAASVTELDQHLAACEDGSDNKPAAPASTAASKQTVVMCFGGQVSTHIGLDPHVYNSVGLLRQHLDNVDTIIQSLGYTTIFPAIFQRVPLADTVHLQTMLFAMQFACAQAWIDSGLRPTVLVGHSFGELTALCVSGALSLVDAVKMIARRAAIVRDAWGIDRGTMMAVEGDLYEVEQLLVDVNSSISPAVPISIACYNGPRSFTLAGSTDTINEVDARLCAQPGRSIKSRRLNVTNAFHSALVDPLLHRLEESCEDLTFRRPVLYLERALDSTSSGPEWSARSVAEHMRNPVYFHHALQRIVQIDPSSSFVFVEAGTNSSITAMTSRALDNKIIKGTSTFHGLSIANCDDGWNKLTDSIMSLWKAGLNVQHWAHHQRQRRYQADIEPLLLPPYQFDPNARHWMDLKPLPRQLPALIEEATKTEADKKPEGLLTFVGFQDSSTQMQAQFQINTNTEEYKSLLLGHMTIQTAPICPATMQISFVIEAIVTIRHELQTEQEPQIQDVQYRSPVCANLSRKTWIEIKDENERGLAWRFEVFSTESHSGPRTIHTTGKIKFTNARDATLQRQLMQFERLFGHHRATDLLKSAEVDEVLANRSIYLIFSEIVDYGEEYRGLQKFASKGHESAGHVVRRHSHDRKTPRFDAHLADTFCQLGGIWINCMTERSQDDIYLANSIDQWIRSPHNAGAAGSTVEPSKEYHVYATHHRPSDKLSLTDVFVFDVKAGKLVEVILGIAYVKIPKLSMQKMLTRLTGSEWLNNTPATSMNQAPVSAPNPATRPSIVDLPSAVTQVPVLLPQGVKPSAEIRPSEPPSRSLLENITERVKAVVADLSGVEVTEIGDECDLADLGIDSLAGMQMVHEIEGALHVTLPEKEILLVVTMRDLMKVVTGVVEVDFEATDSLSSDNDLPSIATSSEGERVATNLTTPAPQSDVDKDEHEAFESNDLRLPAAVVLEAFKETRELTDEHVLGVGQASYVSEALPLQTELSISLTLEAFEALGAGLRNAGPGEQLFRIVHDEEHARFVDYMYDMLEIETQIIKVDRGIITRTAVPFPERSSTVVYAELRRRFPDQRAADELTYYAGTHLMQVLSGETTGVKLIFGTTEGRELVSTFYGEWPLNQVMYTQMEDFFTRLASKLPATNDNKPLRILEMGAGTGGTTKRLVPLLARLQIPVEYTFTDLAPSFVRAARNKWEKLYPWMRFRVHDIEKAPGEDLVNTQHFVLASNAIHATRSIRESTLNVRKFLRSDGYLLMGEMTRTPYWVDIIFGLFEGWWLFDDGRRHALTHESRWETDLQSAGYGHVYWTEGTRPESEIEKLILAAASLTNLAGSDFVQSERNPITKRHQFDNEVSGGCAEREKLIMEYVCDSTQDFAKTFKVPMSSIPRSLHHKSKGKWIVVTGATGGLGAHLVAKAAVRSDVERVVCLNRRSKQNALERQMHALRKQGISLDSECLAKLDVHVTELAQPSSLGLPNELYNLLLDNVTHIVHNAWLMNSKWTVKRFEPQIRIMKHMIHFARDISLRHTESDPVTFIFVSSIATVGFHPLLAKSPIVPEDRVSIDSVLPTGYGEAKYICERMLDTSLHRYPSRFRAAAVRLGQIAGSSLNGYWNPMEHVSFLIKSSQTLRALPNLPGSLGWTPADAIADSLLDICTQPGDVALHPLYHIDNPVRQNWDEMLAVLADVLNISQGASGIVPFDEWLRRVRDWPHTEDNASDGKNPAYVLVDFLEDHFVRMSCGGLLLGTRKAREHSETLACVGPVDAQAIKLYVRSWKDMGFLD.

The interval 111–272 (LIPLVVIEQL…TEITLYGAFH (162 aa)) is N-terminal acylcarrier protein transacylase domain (SAT). Cys-154 (nucleophile; for transacylase activity) is an active-site residue. Catalysis depends on His-272, which acts as the Proton donor/acceptor; for transacylase activity. The 426-residue stretch at 401 to 826 (ESDIAVIGMA…GSNASMIVMQ (426 aa)) folds into the Ketosynthase family 3 (KS3) domain. Residues Cys-573, His-708, and His-749 each act as for beta-ketoacyl synthase activity in the active site. Residues 947-1237 (FGGQVSTHIG…ITAMTSRALD (291 aa)) form a malonyl-CoA:ACP transacylase (MAT) domain region. An N-terminal hotdog fold region spans residues 1339 to 1468 (LTFVGFQDSS…GKIKFTNARD (130 aa)). Positions 1339–1651 (LTFVGFQDSS…YVKIPKLSMQ (313 aa)) constitute a PKS/mFAS DH domain. The segment at 1367-1649 (LLLGHMTIQT…IAYVKIPKLS (283 aa)) is product template (PT) domain. Catalysis depends on His-1371, which acts as the Proton acceptor; for dehydratase activity. The tract at residues 1496–1651 (VDEVLANRSI…YVKIPKLSMQ (156 aa)) is C-terminal hotdog fold. Asp-1555 (proton donor; for dehydratase activity) is an active-site residue. Residues 1723-1797 (ENITERVKAV…DLMKVVTGVV (75 aa)) enclose the Carrier domain. Ser-1757 carries the O-(pantetheine 4'-phosphoryl)serine modification. The segment at 2021 to 2211 (EWPLNQVMYT…AGYGHVYWTE (191 aa)) is methyltransferase domain. The segment at 2303-2548 (VTGATGGLGA…LGWTPADAIA (246 aa)) is NADPH-binding (R) domain.

It participates in secondary metabolite biosynthesis; terpenoid biosynthesis. Non-reducing polyketide synthase; part of the gene cluster that mediates the biosynthesis of eupenifeldin, a bistropolone meroterpenoid that acts as an antitumor agent. The first step of eupenifeldin biosynthesis is the biosynthesis of 3-methylorcinaldehyde performed by the non-reducing polyketide synthase eupA. Oxidative dearomatization of 3-methylorcinaldehyde likely catalyzed by the FAD-dependent monooxygenase eupB is followed by oxidative ring expansion by the 2-oxoglutarate-dependent dioxygenase eupC to provide the first tropolone metabolite, tropolone stipitaldehyde. In parallel, generation of sesquiterpene alpha-humulene from farnesylpyrophosphate (FPP) is catalyzed by the terpene cyclase eupE. The cytochrome P450 monooxygenase eupD then hydroxylates humulene to humulenol. The putative Diels-Alderase eupF probably catalyzes the formation of the tropolone-humulene skeleton by linking humulenol and the polyketide moiety. The short-chain dehydrogenase/reductase eupG and the flavin-dependent monooxygenase eupH are also essential for eupenifeldin biosynthesis and are likely the additional decorating enzymes of the tropolone-humulene skeleton to produce final eupenifeldin or derivatives. The chain is 3-methylorcinaldehyde synthase from Phoma sp.